A 304-amino-acid polypeptide reads, in one-letter code: uncharacterized protein (304 aa).

A signal peptide spans 1–22 (MKKSLTLLILLLCSLLFSTVLS). The interval 91-111 (PAPAPTPESSDPDEPMKPDDS) is disordered. N-linked (GlcNAc...) asparagine glycans are attached at residues Asn133, Asn160, Asn183, and Asn233. A lipid anchor (GPI-anchor amidated serine) is attached at Ser282. The propeptide at 283–304 (SSHLFGVLPFLPLVLCIFLFLL) is removed in mature form.

It localises to the cell membrane. This is an uncharacterized protein from Arabidopsis thaliana (Mouse-ear cress).